The sequence spans 174 residues: Ferredoxin-thioredoxin reductase, variable chain, chloroplastic (174 aa).

A chloroplast-targeting transit peptide spans Met-1–Cys-62. Residues Asp-69–Pro-81 are compositionally biased toward low complexity. Positions Asp-69–Lys-89 are disordered. A phosphoserine mark is found at Ser-70 and Ser-71.

It belongs to the ferredoxin thioredoxin reductase alpha subunit family. Heterodimer of subunit A (variable subunit) and subunit B (catalytic subunit). Heterodimeric FTR forms a complex with ferredoxin and thioredoxin.

Its subcellular location is the plastid. The protein localises to the chloroplast. Variable subunit of the ferredoxin-thioredoxin reductase (FTR), which catalyzes the two-electron reduction of thioredoxins by the electrons provided by reduced ferredoxin. This Spinacia oleracea (Spinach) protein is Ferredoxin-thioredoxin reductase, variable chain, chloroplastic (FTRV).